We begin with the raw amino-acid sequence, 448 residues long: Vimentin (448 aa).

A head region spans residues 1 to 77 (PRHLEPAGSN…FSLADAINTE (77 aa)). Phosphoserine is present on S9. An O-linked (GlcNAc) threonine glycan is attached at T16. S17 is subject to Phosphoserine; by PKC; alternate. S17 carries an O-linked (GlcNAc) serine; alternate glycan. Phosphoserine; by CaMK2, PKA, PKC and ROCK2 is present on S22. S29, S31, and S33 each carry phosphoserine. Y35 carries the phosphotyrosine modification. S37 carries the phosphoserine modification. S38 bears the Phosphoserine; by CDK5 and CDK1 mark. Position 43 is a phosphotyrosine (Y43). S48 carries the phosphoserine; by PKA and PKC modification. Phosphoserine; by AURKB and ROCK2 is present on S54. The residue at position 55 (S55) is a Phosphoserine. S65 carries the post-translational modification Phosphoserine; by CaMK2. Position 69 is a phosphoserine (S69). The interval 78-113 (FKNTRTNEKVELQELNDRFADYIDKVRFLEQQNKIL) is coil 1A. A coiled-coil region spans residues 78–113 (FKNTRTNEKVELQELNDRFADYIDKVRFLEQQNKIL). The 309-residue stretch at 85–393 (EKVELQELND…KLLEGEESRI (309 aa)) folds into the IF rod domain. A Glycyl lysine isopeptide (Lys-Gly) (interchain with G-Cter in SUMO2) cross-link involves residue K86. Phosphotyrosine is present on Y99. N6-acetyllysine; alternate occurs at positions 102, 111, and 121. An N6-succinyllysine; alternate mark is found at K102 and K111. Glycyl lysine isopeptide (Lys-Gly) (interchain with G-Cter in SUMO2); alternate cross-links involve residues K102, K111, and K121. Positions 114–135 (LAELEQLKGQGKSRLGDLYEEE) are linker 1. Phosphoserine is present on S126. Residues 136–227 (MRELRRQVDQ…KLHDEEIQEL (92 aa)) adopt a coiled-coil conformation. A coil 1B region spans residues 136–227 (MRELRRQVDQ…KLHDEEIQEL (92 aa)). At K150 the chain carries N6-acetyllysine. K170 carries the post-translational modification N6-acetyllysine; alternate. K170 carries the N6-succinyllysine; alternate modification. Residue S196 is modified to Phosphoserine. At K205 the chain carries N6-acetyllysine; alternate. K205 participates in a covalent cross-link: Glycyl lysine isopeptide (Lys-Gly) (interchain with G-Cter in SUMO2); alternate. Position 208 is a phosphoserine (S208). K217 carries the post-translational modification N6-acetyllysine. The segment at 228–250 (QAQIQEQHVQIDVDVSKPDLTAA) is linker 12. K244 is covalently cross-linked (Glycyl lysine isopeptide (Lys-Gly) (interchain with G-Cter in SUMO2)). A coil 2 region spans residues 251–389 (LRDVRQQYES…ATYRKLLEGE (139 aa)). N6-acetyllysine; alternate is present on K276. K276 bears the N6-succinyllysine; alternate mark. K276 is covalently cross-linked (Glycyl lysine isopeptide (Lys-Gly) (interchain with G-Cter in SUMO2); alternate). Phosphoserine is present on S281. A coiled-coil region spans residues 285–389 (NRNNDALRQA…ATYRKLLEGE (105 aa)). A Glycyl lysine isopeptide (Lys-Gly) (interchain with G-Cter in SUMO2) cross-link involves residue K295. Position 307 is a phosphoserine (S307). Positions 308–311 (LTCE) match the [IL]-x-C-x-x-[DE] motif motif. Position 355 is an N6-acetyllysine; alternate (K355). A Glycyl lysine isopeptide (Lys-Gly) (interchain with G-Cter in SUMO2); alternate cross-link involves residue K355. A tail region spans residues 390 to 448 (ESRISLPLPNFSSLNLRETNLESLPLVDTHSKRTLLIKTVETRDGQVINETSQHHDDLE). Phosphoserine is present on residues S391, S394, S401, and S402. T408 is subject to Phosphothreonine. S412 bears the Phosphoserine mark. Phosphothreonine is present on T418. Residue S420 is modified to Phosphoserine. A Glycyl lysine isopeptide (Lys-Gly) (interchain with G-Cter in SUMO2) cross-link involves residue K421. N6-acetyllysine; alternate is present on K427. K427 carries the post-translational modification N6-succinyllysine; alternate. Residue K427 forms a Glycyl lysine isopeptide (Lys-Gly) (interchain with G-Cter in SUMO2); alternate linkage. A Glycyl lysine isopeptide (Lys-Gly) (interchain with G-Cter in SUMO1); alternate cross-link involves residue K427. T428 and T440 each carry phosphothreonine. S441 carries the phosphoserine modification.

Belongs to the intermediate filament family. In terms of assembly, homomer assembled from elementary dimers. Identified in complexes that contain VIM, EZR, AHNAK, BFSP1, BFSP2, ANK2, PLEC, PRX and spectrin. Interacts with BCAS3. Interacts with LGSN. Interacts with SYNM. Interacts (via rod region) with PLEC (via CH 1 domain). Interacts with STK33. Interacts with LARP6. Interacts with RAB8B. Interacts with TOR1A; the interaction associates TOR1A with the cytoskeleton. Interacts with TOR1AIP1. Interacts with TOR1AIP1. Interacts with DIAPH1. Interacts with EPPK1; interaction is dependent of higher-order structure of intermediate filament. Interacts with the non-receptor tyrosine kinase SRMS; the interaction leads to phosphorylation of VIM. Interacts with NOD2. Interacts (via head region) with CORO1C. Interacts with HDGF. Interacts with PRKCE (via phorbol-ester/DAG-type 2 domain). Interacts with BFSP2. Interacts with PPL. Interacts with PKP1 and PKP2. Interacts with SCRIB (via PDZ domains); the interaction protects SCRIB from proteasomal degradation and facilitates SCRIB localization to intermediate filaments, the interaction is reduced by cell contact inhibition. One of the most prominent phosphoproteins in various cells of mesenchymal origin. Phosphorylation is enhanced during cell division, at which time vimentin filaments are significantly reorganized. Phosphorylation by PKN1 inhibits the formation of filaments. Filament disassembly during mitosis is promoted by phosphorylation at Ser-37 as well as by nestin. Phosphorylated at Ser-38 by CDK5 during neutrophil secretion in the cytoplasm. Phosphorylated by STK33. Phosphorylated on tyrosine residues by SRMS. In terms of processing, S-nitrosylation is induced by interferon-gamma and oxidatively-modified low-densitity lipoprotein (LDL(ox)) possibly implicating the iNOS-S100A8/9 transnitrosylase complex.

The protein resides in the cytoplasm. It localises to the cytoskeleton. Its subcellular location is the nucleus matrix. It is found in the cell membrane. In terms of biological role, vimentins are class-III intermediate filaments found in various non-epithelial cells, especially mesenchymal cells. Vimentin is attached to the nucleus, endoplasmic reticulum, and mitochondria, either laterally or terminally. Plays a role in cell directional movement, orientation, cell sheet organization and Golgi complex polarization at the cell migration front. Protects SCRIB from proteasomal degradation and facilitates its localization to intermediate filaments in a cell contact-mediated manner. Involved with LARP6 in the stabilization of type I collagen mRNAs for CO1A1 and CO1A2. The polypeptide is Vimentin (VIM) (Cricetulus griseus (Chinese hamster)).